A 24-amino-acid polypeptide reads, in one-letter code: Aldehyde dehydrogenase gamma chain (24 aa).

In terms of assembly, heterotrimer composed of an alpha, a beta and a gamma chain. It depends on [2Fe-2S] cluster as a cofactor.

It carries out the reaction an aldehyde + a quinone + H2O = a quinol + a carboxylate + H(+). This chain is Aldehyde dehydrogenase gamma chain, found in Comamonas testosteroni (Pseudomonas testosteroni).